The sequence spans 268 residues: UPF0354 protein OB2234 (268 aa).

The protein belongs to the UPF0354 family.

This is UPF0354 protein OB2234 from Oceanobacillus iheyensis (strain DSM 14371 / CIP 107618 / JCM 11309 / KCTC 3954 / HTE831).